Here is a 323-residue protein sequence, read N- to C-terminus: Acetyl-coenzyme A carboxylase carboxyl transferase subunit alpha (323 aa).

The CoA carboxyltransferase C-terminal domain occupies 39–293 (RLSKKSQQLT…RRALADSLRQ (255 aa)).

It belongs to the AccA family. As to quaternary structure, acetyl-CoA carboxylase is a heterohexamer composed of biotin carboxyl carrier protein (AccB), biotin carboxylase (AccC) and two subunits each of ACCase subunit alpha (AccA) and ACCase subunit beta (AccD).

It is found in the cytoplasm. The enzyme catalyses N(6)-carboxybiotinyl-L-lysyl-[protein] + acetyl-CoA = N(6)-biotinyl-L-lysyl-[protein] + malonyl-CoA. The protein operates within lipid metabolism; malonyl-CoA biosynthesis; malonyl-CoA from acetyl-CoA: step 1/1. Functionally, component of the acetyl coenzyme A carboxylase (ACC) complex. First, biotin carboxylase catalyzes the carboxylation of biotin on its carrier protein (BCCP) and then the CO(2) group is transferred by the carboxyltransferase to acetyl-CoA to form malonyl-CoA. In Burkholderia lata (strain ATCC 17760 / DSM 23089 / LMG 22485 / NCIMB 9086 / R18194 / 383), this protein is Acetyl-coenzyme A carboxylase carboxyl transferase subunit alpha.